Reading from the N-terminus, the 212-residue chain is ATP-dependent Clp protease proteolytic subunit (212 aa).

The active-site Nucleophile is the Ser114. The active site involves His139.

The protein belongs to the peptidase S14 family. Fourteen ClpP subunits assemble into 2 heptameric rings which stack back to back to give a disk-like structure with a central cavity, resembling the structure of eukaryotic proteasomes.

It is found in the cytoplasm. It catalyses the reaction Hydrolysis of proteins to small peptides in the presence of ATP and magnesium. alpha-casein is the usual test substrate. In the absence of ATP, only oligopeptides shorter than five residues are hydrolyzed (such as succinyl-Leu-Tyr-|-NHMec, and Leu-Tyr-Leu-|-Tyr-Trp, in which cleavage of the -Tyr-|-Leu- and -Tyr-|-Trp bonds also occurs).. In terms of biological role, cleaves peptides in various proteins in a process that requires ATP hydrolysis. Has a chymotrypsin-like activity. Plays a major role in the degradation of misfolded proteins. This chain is ATP-dependent Clp protease proteolytic subunit, found in Aromatoleum aromaticum (strain DSM 19018 / LMG 30748 / EbN1) (Azoarcus sp. (strain EbN1)).